The sequence spans 246 residues: tRNA (guanine-N(1)-)-methyltransferase (246 aa).

Residues G112 and I131–L136 contribute to the S-adenosyl-L-methionine site.

This sequence belongs to the RNA methyltransferase TrmD family. As to quaternary structure, homodimer.

It localises to the cytoplasm. It carries out the reaction guanosine(37) in tRNA + S-adenosyl-L-methionine = N(1)-methylguanosine(37) in tRNA + S-adenosyl-L-homocysteine + H(+). Functionally, specifically methylates guanosine-37 in various tRNAs. This is tRNA (guanine-N(1)-)-methyltransferase from Fervidobacterium nodosum (strain ATCC 35602 / DSM 5306 / Rt17-B1).